Consider the following 426-residue polypeptide: Glutamate-1-semialdehyde 2,1-aminomutase (426 aa).

The residue at position 265 (K265) is an N6-(pyridoxal phosphate)lysine.

It belongs to the class-III pyridoxal-phosphate-dependent aminotransferase family. HemL subfamily. In terms of assembly, homodimer. It depends on pyridoxal 5'-phosphate as a cofactor.

The protein resides in the cytoplasm. It catalyses the reaction (S)-4-amino-5-oxopentanoate = 5-aminolevulinate. It functions in the pathway porphyrin-containing compound metabolism; protoporphyrin-IX biosynthesis; 5-aminolevulinate from L-glutamyl-tRNA(Glu): step 2/2. In Erwinia tasmaniensis (strain DSM 17950 / CFBP 7177 / CIP 109463 / NCPPB 4357 / Et1/99), this protein is Glutamate-1-semialdehyde 2,1-aminomutase.